An 82-amino-acid chain; its full sequence is Small ribosomal subunit protein uS17 (82 aa).

Belongs to the universal ribosomal protein uS17 family. In terms of assembly, part of the 30S ribosomal subunit.

In terms of biological role, one of the primary rRNA binding proteins, it binds specifically to the 5'-end of 16S ribosomal RNA. The polypeptide is Small ribosomal subunit protein uS17 (Rhodopseudomonas palustris (strain TIE-1)).